The primary structure comprises 529 residues: Neuronal acetylcholine receptor subunit alpha-2 (529 aa).

The first 26 residues, 1 to 26, serve as a signal peptide directing secretion; that stretch reads MGPSCPVFLSFTKLSLWWLLLTPAGG. Positions 27-56 are disordered; the sequence is EEAKRPPPRAPGDPLSSPSPTALPQGGSHT. Residues 27-264 are Extracellular-facing; it reads EEAKRPPPRA…VTYAFIIRRL (238 aa). Asparagine 79 and asparagine 129 each carry an N-linked (GlcNAc...) asparagine glycan. Residues cysteine 183 and cysteine 197 are joined by a disulfide bond. An N-linked (GlcNAc...) asparagine glycan is attached at asparagine 235. A disulfide bridge connects residues cysteine 247 and cysteine 248. The next 3 helical transmembrane spans lie at 265–289, 297–315, and 331–352; these read PLFYTINLIIPCLLISCLTVLVFYL, ITLCISVLLSLTVFLLLIT, and YLLFTMIFVTLSIVITVFVLNV. The Cytoplasmic portion of the chain corresponds to 353–502; the sequence is HHRSPSTHTM…WKYVAMVIDR (150 aa). A helical transmembrane segment spans residues 503–521; the sequence is IFLWLFIIVCFLGTIGLFL.

Belongs to the ligand-gated ion channel (TC 1.A.9) family. Acetylcholine receptor (TC 1.A.9.1) subfamily. Alpha-2/CHRNA2 sub-subfamily. As to quaternary structure, neuronal AChR is composed of two different types of subunits: alpha and non-alpha (beta). CHRNA2/alpha-2 subunit can be combined to CHRNB2/beta-2 or CHRNB4/beta-4 to give rise to functional receptors. Both CHRNA2:CHRNB2 and CHRNA2:CHRNB4 nAChR complexes are heteropentamers with two subtypes: LS (low agonist sensitivity) with a (CHRNA2)3:(CHRNB2/4)2 and HS (high agonist sensitivity) with a (CHRNA2)2:(CHRNB2/4)3 stoichiometries; the subtypes differ in their subunit binding interfaces which are involved in ligand binding.

The protein localises to the synaptic cell membrane. It localises to the cell membrane. It carries out the reaction Ca(2+)(in) = Ca(2+)(out). It catalyses the reaction K(+)(in) = K(+)(out). The enzyme catalyses Na(+)(in) = Na(+)(out). Functionally, component of neuronal acetylcholine receptors (nAChRs) that function as pentameric, ligand-gated cation channels with high calcium permeability among other activities. nAChRs are excitatory neurotrasnmitter receptors formed by a collection of nAChR subunits known to mediate synaptic transmission in the nervous system and the neuromuscular junction. Each nAchR subunit confers differential attributes to channel properties, including activation, deactivation and desensitization kinetics, pH sensitivity, cation permeability, and binding to allosteric modulators. CHRNA2 forms heteropentameric neuronal acetylcholine receptors with CHRNB2 and CHRNB4 and plays a role in nicotine dependence. This Pan troglodytes (Chimpanzee) protein is Neuronal acetylcholine receptor subunit alpha-2 (CHRNA2).